The sequence spans 452 residues: Neuronal acetylcholine receptor subunit alpha-5 (452 aa).

The N-terminal stretch at methionine 1 to serine 27 is a signal peptide. The Extracellular portion of the chain corresponds to alanine 28–threonine 239. 3 N-linked (GlcNAc...) asparagine glycosylation sites follow: asparagine 140, asparagine 168, and asparagine 214. A disulfide bridge links cysteine 155 with cysteine 169. The cysteines at positions 219 and 220 are disulfide-linked. 3 helical membrane passes run leucine 240–proline 260, leucine 269–proline 289, and leucine 302–isoleucine 322. Topologically, residues histidine 323 to methionine 414 are cytoplasmic. Residues phenylalanine 415–isoleucine 435 traverse the membrane as a helical segment. Topologically, residues tyrosine 436 to lysine 452 are extracellular.

The protein belongs to the ligand-gated ion channel (TC 1.A.9) family. Acetylcholine receptor (TC 1.A.9.1) subfamily. Alpha-5/CHRNA5 sub-subfamily. As to quaternary structure, neuronal AChR that forms heteropentamers composed of two different type of subunits: alpha and non-alpha (beta). CHRNA5/alpha-5 subunit is only able to form functional nAChRs when co-assembled with another alpha subunit, can be combined to CHRNA4/alpha-4 or CHRNA3/alpha-3 and CHRNB4/beta-4 or CHRNB2/beta-2 to give rise to functional receptors. Interacts with LYPD6.

It is found in the synaptic cell membrane. It localises to the cell membrane. The enzyme catalyses Ca(2+)(in) = Ca(2+)(out). It carries out the reaction K(+)(in) = K(+)(out). It catalyses the reaction Na(+)(in) = Na(+)(out). With respect to regulation, activated by a myriad of ligands such as acetylcholine, cytisine, nicotine, choline and epibatidine. Component of neuronal acetylcholine receptors (nAChRs) that function as pentameric, ligand-gated cation channels with high calcium permeability among other activities. nAChRs are excitatory neurotrasnmitter receptors formed by a collection of nAChR subunits known to mediate synaptic transmission in the nervous system and the neuromuscular junction. Each nAchR subunit confers differential attributes to channel properties, including activation, deactivation and desensitization kinetics, pH sensitivity, cation permeability, and binding to allosteric modulators. Has an accessory rather than functional role and is only able to form functional nAChRs when co-assembled with another beta subunit. Participates in pentameric assemblies along with CHRNA3, CHRNA4, CHRNB2 and CHRNB4. Increases receptor sensitivity to acetylcholine and nicotine when associated with CHRNA4 and CHRNB2. Plays a role in nicotine addiction. In Rattus norvegicus (Rat), this protein is Neuronal acetylcholine receptor subunit alpha-5 (Chrna5).